We begin with the raw amino-acid sequence, 141 residues long: Myosin regulatory light chain cdc4 (141 aa).

Residues S2 and S6 each carry the phosphoserine modification. 3 EF-hand domains span residues 3–38 (TDDS…CGQN), 74–109 (GDPE…LGEK), and 109–141 (KLSN…ILAN). Positions 87, 89, 91, 93, and 98 each coordinate Ca(2+).

As to quaternary structure, binds to myosin II chains myo2 and myo3. Interacts with vps27 and a PI 4-kinase pik1. Phosphorylated on either Ser-2 or Ser-6 but not both. Phosphorylation is not essential for the function of the protein.

The protein resides in the cytoplasm. Its function is as follows. Involved in cytokinesis. Required for the formation and function of the contractile ring. The protein is Myosin regulatory light chain cdc4 (cdc4) of Schizosaccharomyces pombe (strain 972 / ATCC 24843) (Fission yeast).